A 476-amino-acid chain; its full sequence is Protein transport protein Sec61 subunit alpha (476 aa).

Residues 2 to 33 (GIKFLEVIKPFCAVLPEIQKPERKIQFREKVL) lie on the Cytoplasmic side of the membrane. Residues 34-53 (WTAITLFIFLVCCQIPLFGI) traverse the membrane as a helical segment. At 54–76 (MSSDSADPFYWMRVILASNRGTL) the chain is on the lumenal side. The chain crosses the membrane as a helical span at residues 77-96 (MELGISPIVTSGLIMQLLAG). At 97-117 (AKIIEVGDTPKDRALFNGAQK) the chain is on the cytoplasmic side. A helical transmembrane segment spans residues 118-138 (LFGMIITIGQAIVYVMTGMYG). Over 139–144 (DPSEMG) the chain is Lumenal. A helical transmembrane segment spans residues 145 to 165 (AGICLLIIIQLFVAGLIVLLL). At 166–172 (DELLQKG) the chain is on the cytoplasmic side. The chain crosses the membrane as a helical span at residues 173–193 (YGLGSGISLFIATNICETIVW). Residues 194–240 (KAFSPTTVNTGRGTEFEGAIIALFHLLATRTDKVRALREAFYRQNLP) are Lumenal-facing. The helical transmembrane segment at 241-261 (NILNLIATVFVFAVVIYFQGF) threads the bilayer. Over 262-288 (RVDLPIKSARYRGQYNTYPIKLFYTSN) the chain is Cytoplasmic. A helical membrane pass occupies residues 289–309 (IPIILQSALVSNLYVISQMLS). The Lumenal portion of the chain corresponds to 310–354 (TRFSGNFLVNLLGTWSDATSGGPARAYPVAGLCYYLSPPESFGSV). Residues 355–375 (LDDPVHAAIYIVFMLGSCAFF) form a helical membrane-spanning segment. Residues 376–420 (SKTWIEVSGSSAKDVAKQLKEQQMVMRGHRETSMVHELNRYIPTA) are Cytoplasmic-facing. The chain crosses the membrane as a helical span at residues 421-441 (AAFGGLCIGGLSVMADFLGAI). Over 442–445 (GSGT) the chain is Lumenal. A helical transmembrane segment spans residues 446-462 (GILLAVTIIYQYFEIFV). Topologically, residues 463 to 476 (KEQSEMGSMGALLF) are cytoplasmic.

The protein belongs to the SecY/SEC61-alpha family. As to quaternary structure, the SEC61 channel-forming translocon complex consists of channel-forming core components SEC61A1, SEC61B and SEC61G and different auxiliary components such as SEC62 and SEC63. The SEC61 channel associates with the multi-pass translocon (MPT) complex.

The protein resides in the endoplasmic reticulum membrane. In terms of biological role, component of SEC61 channel-forming translocon complex that mediates transport of signal peptide-containing precursor polypeptides across the endoplasmic reticulum (ER). Forms a ribosome receptor and a gated pore in the ER membrane, both functions required for cotranslational translocation of nascent polypeptides. May cooperate with auxiliary protein SEC62, SEC63 and HSPA5/BiP to enable post-translational transport of small presecretory proteins. The SEC61 channel is also involved in ER membrane insertion of transmembrane proteins: it mediates membrane insertion of the first few transmembrane segments of proteins, while insertion of subsequent transmembrane regions of multi-pass membrane proteins is mediated by the multi-pass translocon (MPT) complex. This Dissostichus mawsoni (Antarctic cod) protein is Protein transport protein Sec61 subunit alpha (sec61a).